Here is a 77-residue protein sequence, read N- to C-terminus: Conotoxin VnMKLT1-012 (77 aa).

A signal peptide spans 1 to 22 (MKLTCMMIVAVLFLTAWTFVTA). Residues 23 to 48 (DDSRNGLDYLFPKARHEMNPKASRDI) constitute a propeptide that is removed on maturation. 3 cysteine pairs are disulfide-bonded: Cys51-Cys68, Cys58-Cys72, and Cys67-Cys76.

Belongs to the conotoxin O1 superfamily. Expressed by the venom duct.

Its subcellular location is the secreted. This chain is Conotoxin VnMKLT1-012, found in Conus ventricosus (Mediterranean cone).